Reading from the N-terminus, the 550-residue chain is Probable asparagine synthetase [glutamine-hydrolyzing] (550 aa).

C2 functions as the For GATase activity in the catalytic mechanism. Positions C2–S189 constitute a Glutamine amidotransferase type-2 domain. Residues R53–M57, N78–E80, and D100 each bind L-glutamine. An Asparagine synthetase domain is found at Y213–Y530. ATP contacts are provided by residues L256, V284, and S360–G361.

The enzyme catalyses L-aspartate + L-glutamine + ATP + H2O = L-asparagine + L-glutamate + AMP + diphosphate + H(+). Its pathway is amino-acid biosynthesis; L-asparagine biosynthesis; L-asparagine from L-aspartate (L-Gln route): step 1/1. The chain is Probable asparagine synthetase [glutamine-hydrolyzing] from Acanthamoeba polyphaga mimivirus (APMV).